Consider the following 176-residue polypeptide: Lipocalin-1 (176 aa).

Residues 1–19 (MMRALLLAIGLGLVAALQA) form the signal peptide. Cysteines 80 and 171 form a disulfide.

The protein belongs to the calycin superfamily. Lipocalin family. In terms of assembly, predominantly monomer. May form homodimer. Interacts with LMBR1L; this interaction mediates the endocytosis of LCN1.

It localises to the secreted. Functionally, could play a role in taste reception. Could be necessary for the concentration and delivery of sapid molecules in the gustatory system. Can bind various ligands, with chemical structures ranging from lipids and retinoids to the macrocyclic antibiotic rifampicin and even to microbial siderophores. Exhibits an extremely wide ligand pocket. This chain is Lipocalin-1 (LCN1), found in Sus scrofa (Pig).